The chain runs to 220 residues: EXFRDVNKQDVLLFIDNILRSVQAGSEVSALLGRMPSAVGYQPTLSTEMGSLQERITSTKEGSITSIQAVYVPADDSTDPAPATTFAHPDATTVLPRGLAAKGIYPAVDPLDPTPTMLQPWIVGEEHYETAQGVKQTLQRYKEPQDIIAILGLDELSEEDRLTVARARKIERFLSQPFFVAEVFTGSPGKYVSPIETIKGFQMILSGELDSLPEQAFYLV.

The protein belongs to the ATPase alpha/beta chains family. As to quaternary structure, F-type ATPases have 2 components, CF(1) - the catalytic core - and CF(0) - the membrane proton channel. CF(1) has five subunits: alpha(3), beta(3), gamma(1), delta(1), epsilon(1). CF(0) has four main subunits: a(1), b(1), b'(1) and c(9-12).

The protein resides in the plastid. Its subcellular location is the chloroplast thylakoid membrane. The catalysed reaction is ATP + H2O + 4 H(+)(in) = ADP + phosphate + 5 H(+)(out). Produces ATP from ADP in the presence of a proton gradient across the membrane. The catalytic sites are hosted primarily by the beta subunits. In Osmundastrum cinnamomeum (Cinnamon fern), this protein is ATP synthase subunit beta, chloroplastic (atpB).